We begin with the raw amino-acid sequence, 408 residues long: Protein trichome birefringence-like 14 (408 aa).

Residues 11-31 traverse the membrane as a helical; Signal-anchor for type II membrane protein segment; sequence GSVSLALIVLILLVIILLVSE. The short motif at 131–133 is the GDS motif element; that stretch reads GDS. The DCXHWCLPGXXDXWN motif motif lies at 387–401; it reads DCLHWCLPGIPDTWN.

Belongs to the PC-esterase family. TBL subfamily.

It is found in the membrane. Functionally, may act as a bridging protein that binds pectin and other cell wall polysaccharides. Probably involved in maintaining esterification of pectins. May be involved in the specific O-acetylation of cell wall polymers. The polypeptide is Protein trichome birefringence-like 14 (TBL14) (Arabidopsis thaliana (Mouse-ear cress)).